A 745-amino-acid polypeptide reads, in one-letter code: Translation initiation factor IF-2 (745 aa).

The segment at 1–154 (MSDKPRRDTG…PAARPVVRPR (154 aa)) is disordered. Residues 36–56 (TGRSPNASTGGNRSAGNQAGN) show a composition bias toward polar residues. The segment covering 68 to 98 (ATTPAPNRNTPPAGARQGGAANARTGTPPVA) has biased composition (low complexity). The segment covering 99–113 (RGGGGGVTPPTGRGG) has biased composition (gly residues). The span at 114-126 (NNPRAARNQPRSR) shows a compositional bias: low complexity. Residues 127 to 138 (QQPEEREREHVL) are compositionally biased toward basic and acidic residues. One can recognise a tr-type G domain in the interval 241 to 410 (PRPPVVTIMG…LLVADLEDLR (170 aa)). A G1 region spans residues 250–257 (GHVDHGKT). 250 to 257 (GHVDHGKT) contacts GTP. The G2 stretch occupies residues 275–279 (GITQH). Residues 296-299 (DTPG) form a G3 region. GTP contacts are provided by residues 296-300 (DTPGH) and 350-353 (NKID). The segment at 350–353 (NKID) is G4. Residues 386 to 388 (SAR) form a G5 region.

This sequence belongs to the TRAFAC class translation factor GTPase superfamily. Classic translation factor GTPase family. IF-2 subfamily.

The protein localises to the cytoplasm. One of the essential components for the initiation of protein synthesis. Protects formylmethionyl-tRNA from spontaneous hydrolysis and promotes its binding to the 30S ribosomal subunits. Also involved in the hydrolysis of GTP during the formation of the 70S ribosomal complex. The sequence is that of Translation initiation factor IF-2 from Chloroflexus aurantiacus (strain ATCC 29366 / DSM 635 / J-10-fl).